The sequence spans 1367 residues: MAP3K epsilon protein kinase 2 (1367 aa).

Residues 20-274 enclose the Protein kinase domain; sequence YMLGDEIGKG…AKTLLSHPWI (255 aa). HEAT repeat units lie at residues 25–62 and 86–125; these read EIGKGAYGRVYIGLDLENGDFVAIKQVSLENIGQEDLN and LKTKTHLHIILEYVENGSLANIIKPNKFGPFPESLVTVYI. ATP contacts are provided by residues 26–34 and lysine 49; that span reads IGKGAYGRV. The active-site Proton acceptor is the aspartate 144. Residues 218-256 form an HEAT 3 repeat; sequence PYYDLQPMPALYRIVQDDTPPIPDSLSPDITDFLRLCFK. Disordered stretches follow at residues 285 to 422 and 437 to 513; these read LRHS…GRRN and SSHS…VADG. A compositionally biased stretch (basic and acidic residues) spans 293 to 306; sequence YMKETDSSSEKDAE. Residues 351-363 show a composition bias toward acidic residues; that stretch reads LGEEGTDSEDDIN. Positions 378 to 396 are enriched in polar residues; that stretch reads RQSGTCSISSDAKGTSQDV. Basic and acidic residues-rich tracts occupy residues 397 to 408 and 475 to 491; these read LENHEKYDRDEI and SLHDLFHPLDKVPEGKT. Residues 492 to 507 are compositionally biased toward polar residues; the sequence is NEASTSTPTANVNQGD. 5 HEAT repeats span residues 538 to 576, 577 to 614, 633 to 658, 659 to 700, and 704 to 742; these read SQDGGDLFRLMMGVLKDDVLNIDDLVFDEKVPPENLFPL, QAVEFSRLVSSLRPDESEDAIVTSSLKLVAMFRQRPGQ, IPKSRVICAVLQLINEIVKDNTDFLE, NACL…SSPL, and MFISCRGIPVLVGFLEADYAKHREMVHLAIDGMWQVFKL. A disordered region spans residues 792-860; it reads PRARSGQLDP…LHPDGDRPRL (69 aa). Composition is skewed to polar residues over residues 799–814 and 835–845; these read LDPNNPIFSQRETSPS and ALTSNSQSSDV. Basic and acidic residues predominate over residues 846–859; sequence HQPDALHPDGDRPR. HEAT repeat units follow at residues 850–888, 906–943, 1045–1066, 1067–1105, 1112–1150, 1154–1191, 1196–1236, 1257–1280, 1281–1317, and 1347–1367; these read ALHPDGDRPRLSSVVADATEDVIQQHRISLSANRTSTDK, DQVRPLLSLLEKEPPSRKISGQLDYVKHIAGIERHESR, DYLEKVADLLLEFARAETTVKS, YMCSQSLLSRLFQMFNRVEPPILLKILECTNHLSTDPNC, ADAIKQLIPNLELKEGPLVYQIHHEVLSALFNLCKINKR, QAAENGIIPHLMLFVMSDSPLKQYALPLLCDMAHASRN, LRAH…KVEQ, RHFVHILEPFLKIITKSSSINKTL, ALNGLTPLLIARLDHQDAIARLNLLKLIKAVYEKHPK, and QVLVKQMATSLLKALHINTIL.

The protein belongs to the protein kinase superfamily. Ser/Thr protein kinase family. Autophosphorylated. In terms of tissue distribution, expressed in both the sporophytic and the gametophytic tissues, especially in dividing cells. Mostly present in flower buds and mature flowers. Also accumulates in embryos and in roots.

The protein localises to the cytoplasm. The protein resides in the cytoskeleton. Its subcellular location is the microtubule organizing center. It is found in the nucleus. It localises to the nucleolus. The protein localises to the cell membrane. It catalyses the reaction L-seryl-[protein] + ATP = O-phospho-L-seryl-[protein] + ADP + H(+). It carries out the reaction L-threonyl-[protein] + ATP = O-phospho-L-threonyl-[protein] + ADP + H(+). Functionally, serine/threonine-protein kinase involved in the spatial and temporal control system organizing cortical activities in mitotic and postmitotic cells. Required for the normal functioning of the plasma membrane in developing pollen. Involved in the regulation of cell expansion and embryo development. The polypeptide is MAP3K epsilon protein kinase 2 (Arabidopsis thaliana (Mouse-ear cress)).